Here is a 227-residue protein sequence, read N- to C-terminus: 2,3-bisphosphoglycerate-dependent phosphoglycerate mutase (227 aa).

Substrate is bound by residues 7–14 (RHGFSEWN), 20–21 (TG), R59, 86–89 (ERHY), K97, 113–114 (RR), and 182–183 (GN). Residue H8 is the Tele-phosphohistidine intermediate of the active site. The Proton donor/acceptor role is filled by E86.

This sequence belongs to the phosphoglycerate mutase family. BPG-dependent PGAM subfamily. Homodimer.

It catalyses the reaction (2R)-2-phosphoglycerate = (2R)-3-phosphoglycerate. Its pathway is carbohydrate degradation; glycolysis; pyruvate from D-glyceraldehyde 3-phosphate: step 3/5. In terms of biological role, catalyzes the interconversion of 2-phosphoglycerate and 3-phosphoglycerate. The chain is 2,3-bisphosphoglycerate-dependent phosphoglycerate mutase from Haemophilus influenzae (strain 86-028NP).